The primary structure comprises 355 residues: Heat-inducible transcription repressor HrcA (355 aa).

It belongs to the HrcA family.

Functionally, negative regulator of class I heat shock genes (grpE-dnaK-dnaJ and groELS operons). Prevents heat-shock induction of these operons. The polypeptide is Heat-inducible transcription repressor HrcA (Prosthecochloris aestuarii (strain DSM 271 / SK 413)).